The chain runs to 1172 residues: NACHT, LRR and PYD domains-containing protein 1b allele 3 (1172 aa).

The segment at 1–22 (MEESPPKQKSNTKVAQHEGQQD) is disordered. An NACHT domain is found at 126–435 (QLVIIEGAAG…EFFAAISCIL (310 aa)). Position 132 to 139 (132 to 139 (GAAGIGKS)) interacts with ATP. LRR repeat units lie at residues 627 to 647 (NLEGLDLSGNSLRYSVVQSLC) and 684 to 704 (SLTELYLQLNDLGDDGVRMLC). The interval 789-922 (FWGPTGPVAT…GYTVLKNPSF (134 aa)) is ZU5. The FIIND domain maps to 789–1072 (FWGPTGPVAT…LRPALPRIAQ (284 aa)). Residues 923–1072 (SPMGDVLRII…LRPALPRIAQ (150 aa)) form a UPA region. Residues 1082–1165 (HFMDQHREQL…HLVMDLLEKS (84 aa)) enclose the CARD domain.

It belongs to the NLRP family. In terms of processing, in contrast to allele 1 and 2, not able to mediate autocatalytic cleavage. In terms of tissue distribution, expressed in macrophages.

It is found in the cytoplasm. The protein resides in the cytosol. In contrast to allele 1, does not undergo autocatalytic cleavage within the FIIND domain and its mode of activation remains unclear. In contrast to alleles 1 and 2, allele 3 is not activated by Val-boroPro (Talabostat, PT-100). Not activated by cleavage by B.anthracis lethal toxin (LT) endopeptidase. Not activated by metabolic inhibitors, such as 2-deoxy-D-glucose and sodium azide. May act as the sensor component of the Nlrp1b inflammasome, which mediates inflammasome activation in response to various pathogen-associated signals, leading to subsequent pyroptosis. Inflammasomes are supramolecular complexes that assemble in the cytosol in response to pathogens and other damage-associated signals and play critical roles in innate immunity and inflammation. May act as a recognition receptor (PRR), which recognizes specific pathogens and other damage-associated signals and forms an inflammasome complex: the inflammasome directly recruits pro-caspase-1 (proCASP1) independently of PYCARD/ASC and promotes caspase-1 (CASP1) activation, which subsequently cleaves and activates inflammatory cytokines IL1B and IL18 and gasdermin-D (GSDMD), leading to pyroptosis. In the absence of GSDMD expression, the Nlrp1b inflammasome is able to recruit and activate CASP8, leading to activation of gasdermin-E (GSDME). Contrary to Nlrp1b allele 1, allele 3 is not activated by Bacillus anthracis lethal toxin. The absence of autocatalytic cleavage within the FIIND domain, which regulates activation in other alleles, suggests that allele 3 may be non-functional. In Mus musculus (Mouse), this protein is NACHT, LRR and PYD domains-containing protein 1b allele 3.